A 120-amino-acid chain; its full sequence is Histone H2B (120 aa).

The segment at 1–26 (MAEPAKKKPKKLPKKDKGQKDIKRKK) is disordered. A Blocked amino end (Ala) modification is found at Ala-2. N6-acetyllysine is present on residues Lys-7, Lys-10, and Lys-11. Lys-115 is covalently cross-linked (Glycyl lysine isopeptide (Lys-Gly) (interchain with G-Cter in ubiquitin)).

This sequence belongs to the histone H2B family. In terms of assembly, the nucleosome is a histone octamer containing two molecules each of H2A, H2B, H3 and H4 assembled in one H3-H4 heterotetramer and two H2A-H2B heterodimers. The octamer wraps approximately 147 bp of DNA. Post-translationally, can be acetylated to form H2BK6ac, H2BK33ac and H2BK34ac. Monoubiquitinated to form H2BK143ub1; may give a specific tag for epigenetic transcriptional activation.

It is found in the nucleus. It localises to the chromosome. Its function is as follows. Core component of nucleosome. Nucleosomes wrap and compact DNA into chromatin, limiting DNA accessibility to the cellular machineries which require DNA as a template. Histones thereby play a central role in transcription regulation, DNA repair, DNA replication and chromosomal stability. DNA accessibility is regulated via a complex set of post-translational modifications of histones, also called histone code, and nucleosome remodeling. This is Histone H2B from Pisum sativum (Garden pea).